Reading from the N-terminus, the 213-residue chain is Cytochrome b-c1 complex subunit Rieske, mitochondrial (213 aa).

The transit peptide at 1–29 (MSSLAFRTLRNGLGLKSSVRALSTTTTTL) directs the protein to the mitochondrion. Residues 30–47 (SNYQQPDYSSYLNNKSGQ) lie on the Mitochondrial matrix side of the membrane. A helical membrane pass occupies residues 48–77 (GSRNFTYFMVGSMGLLSAAGAKSTVEAFLS). At 78–213 (SFAASADVLA…FTDDETLLVG (136 aa)) the chain is on the mitochondrial intermembrane side. Positions 116 to 211 (RHRTADEIEE…YDFTDDETLL (96 aa)) constitute a Rieske domain. The [2Fe-2S] cluster site is built by cysteine 156, histidine 158, cysteine 175, and histidine 178. A disulfide bridge connects residues cysteine 161 and cysteine 177.

The protein belongs to the Rieske iron-sulfur protein family. In terms of assembly, component of the ubiquinol-cytochrome c oxidoreductase (cytochrome b-c1 complex, complex III, CIII), a multisubunit enzyme composed of 10 subunits. The complex is composed of 3 respiratory subunits cytochrome b (COB), cytochrome c1 (CYT1) and Rieske protein (RIP1), 2 core protein subunits COR1 and QCR2, and 5 low-molecular weight protein subunits QCR6, QCR7, QCR8, QCR9 and QCR10. The complex exists as an obligatory dimer and forms supercomplexes (SCs) in the inner mitochondrial membrane with a monomer or a dimer of cytochrome c oxidase (complex IV, CIV), resulting in 2 different assemblies (supercomplexes III(2)IV and III(2)IV(2)). Requires [2Fe-2S] cluster as cofactor.

Its subcellular location is the mitochondrion inner membrane. It carries out the reaction a quinol + 2 Fe(III)-[cytochrome c](out) = a quinone + 2 Fe(II)-[cytochrome c](out) + 2 H(+)(out). Component of the ubiquinol-cytochrome c oxidoreductase, a multisubunit transmembrane complex that is part of the mitochondrial electron transport chain which drives oxidative phosphorylation. The complex plays an important role in the uptake of multiple carbon sources present in different host niches. The chain is Cytochrome b-c1 complex subunit Rieske, mitochondrial from Candida albicans (strain SC5314 / ATCC MYA-2876) (Yeast).